Consider the following 446-residue polypeptide: MAASATTMLLKYPTLCAMPNSSSSSNNNDLPTSIPLNNNNNLLSNKNKILQTPNINTSTNKIITKAVASPVFPTLKTTSNTPSSIRSLVHEFDPEIPPEDALTPPSTWYTEPAFYSHELERIFYKGWQVAGYSEQVKEKNQYFTGSLGNVEYLVSRDGQGELHAFHNVCTHRASILACGSGKKSCFVCPYHGWVYGLDGSLAKASKATETQNLDPKELGLAPLKVAEWGPFILISLDRSLDANADVGTEWIGKSAEDVKAHAFDPNLKFTHRSEFPMECNWKVFCDNYLDSSYHVPYAHKYYAAELDFDTYNTEMIEKCVIQRVGSSSNKPDGFDRLGTEAFYAFIYPNFAVERYGTWMTTMHVVPMGQRKCKLVVDYYLEKAMLDDKAYIDKGIAINDNVQKEDKVLCESVQRGLETPAYRSGRYVMPIEKGIHHFHCWLHETLQ.

A chloroplast-targeting transit peptide spans 1-65 (MAASATTMLL…NTSTNKIITK (65 aa)). Residues 127–234 (WQVAGYSEQV…VAEWGPFILI (108 aa)) enclose the Rieske domain. Residues cysteine 169, histidine 171, cysteine 188, and histidine 191 each contribute to the [2Fe-2S] cluster site. The Fe cation site is built by histidine 294 and histidine 299.

Belongs to the choline monooxygenase family. [2Fe-2S] cluster serves as cofactor. Requires Fe cation as cofactor. It depends on Mg(2+) as a cofactor. Expressed in roots and leaves.

It localises to the plastid. It is found in the chloroplast stroma. The catalysed reaction is choline + 2 reduced [2Fe-2S]-[ferredoxin] + O2 + 2 H(+) = betaine aldehyde hydrate + 2 oxidized [2Fe-2S]-[ferredoxin] + H2O. The protein operates within amine and polyamine biosynthesis; betaine biosynthesis via choline pathway; betaine aldehyde from choline (monooxygenase route): step 1/1. Catalyzes the first step of the osmoprotectant glycine betaine synthesis. This is Choline monooxygenase, chloroplastic (CMO) from Beta vulgaris (Sugar beet).